The chain runs to 429 residues: Adenylosuccinate synthetase (429 aa).

GTP contacts are provided by residues 12 to 18 (GDEGKGK) and 40 to 42 (GHT). The active-site Proton acceptor is the Asp-13. Mg(2+) is bound by residues Asp-13 and Gly-40. IMP contacts are provided by residues 13 to 16 (DEGK), 38 to 41 (NAGH), Thr-130, Arg-144, Gln-225, Thr-240, and Arg-304. The Proton donor role is filled by His-41. Substrate is bound at residue 300 to 306 (ATTGRPR). Residues Arg-306, 332-334 (KLD), and 414-416 (SVG) contribute to the GTP site.

This sequence belongs to the adenylosuccinate synthetase family. Homodimer. It depends on Mg(2+) as a cofactor.

Its subcellular location is the cytoplasm. The catalysed reaction is IMP + L-aspartate + GTP = N(6)-(1,2-dicarboxyethyl)-AMP + GDP + phosphate + 2 H(+). Its pathway is purine metabolism; AMP biosynthesis via de novo pathway; AMP from IMP: step 1/2. Functionally, plays an important role in the de novo pathway of purine nucleotide biosynthesis. Catalyzes the first committed step in the biosynthesis of AMP from IMP. The polypeptide is Adenylosuccinate synthetase (Syntrophobacter fumaroxidans (strain DSM 10017 / MPOB)).